Here is a 175-residue protein sequence, read N- to C-terminus: Large ribosomal subunit protein bL17 (175 aa).

The segment at 124–175 (VKKSKPTAPAQAVATKPAVEETREAAAAQPQEPEVEISEVKDPAEECEAKAD) is disordered. Residues 161 to 175 (SEVKDPAEECEAKAD) show a composition bias toward basic and acidic residues.

Belongs to the bacterial ribosomal protein bL17 family. Part of the 50S ribosomal subunit. Contacts protein L32.

The protein is Large ribosomal subunit protein bL17 of Geobacter sulfurreducens (strain ATCC 51573 / DSM 12127 / PCA).